We begin with the raw amino-acid sequence, 291 residues long: 4-hydroxy-tetrahydrodipicolinate synthase (291 aa).

Threonine 45 contributes to the pyruvate binding site. Catalysis depends on tyrosine 131, which acts as the Proton donor/acceptor. Lysine 159 functions as the Schiff-base intermediate with substrate in the catalytic mechanism. Residue isoleucine 202 coordinates pyruvate.

Belongs to the DapA family. As to quaternary structure, homotetramer; dimer of dimers.

The protein resides in the cytoplasm. It carries out the reaction L-aspartate 4-semialdehyde + pyruvate = (2S,4S)-4-hydroxy-2,3,4,5-tetrahydrodipicolinate + H2O + H(+). It functions in the pathway amino-acid biosynthesis; L-lysine biosynthesis via DAP pathway; (S)-tetrahydrodipicolinate from L-aspartate: step 3/4. In terms of biological role, catalyzes the condensation of (S)-aspartate-beta-semialdehyde [(S)-ASA] and pyruvate to 4-hydroxy-tetrahydrodipicolinate (HTPA). In Methanosarcina mazei (strain ATCC BAA-159 / DSM 3647 / Goe1 / Go1 / JCM 11833 / OCM 88) (Methanosarcina frisia), this protein is 4-hydroxy-tetrahydrodipicolinate synthase.